Consider the following 260-residue polypeptide: Neuraminyllactose-binding hemagglutinin (260 aa).

An N-terminal signal peptide occupies residues 1-27 (MKANNHFKDFAWKKCLLGASVVALLVG). A lipid anchor (N-palmitoyl cysteine) is attached at Cys-28. Cys-28 carries the S-diacylglycerol cysteine lipid modification.

Its subcellular location is the cell outer membrane. The sequence is that of Neuraminyllactose-binding hemagglutinin (hpaA) from Helicobacter pylori (strain ATCC 700392 / 26695) (Campylobacter pylori).